Reading from the N-terminus, the 147-residue chain is Myoglobin (147 aa).

In terms of domain architecture, Globin spans 2 to 141 (ADFDAVLKCW…IIADLEANYK (140 aa)). Position 60 (His60) interacts with nitrite. His60 is an O2 binding site. His89 is a binding site for heme b.

The protein belongs to the globin family. In terms of assembly, monomeric.

The protein resides in the cytoplasm. It is found in the sarcoplasm. The enzyme catalyses Fe(III)-heme b-[protein] + nitric oxide + H2O = Fe(II)-heme b-[protein] + nitrite + 2 H(+). The catalysed reaction is H2O2 + AH2 = A + 2 H2O. Monomeric heme protein which primary function is to store oxygen and facilitate its diffusion within muscle tissues. Reversibly binds oxygen through a pentacoordinated heme iron and enables its timely and efficient release as needed during periods of heightened demand. Depending on the oxidative conditions of tissues and cells, and in addition to its ability to bind oxygen, it also has a nitrite reductase activity whereby it regulates the production of bioactive nitric oxide. Under stress conditions, like hypoxia and anoxia, it also protects cells against reactive oxygen species thanks to its pseudoperoxidase activity. The polypeptide is Myoglobin (mb) (Thunnus alalunga (Albacore)).